The chain runs to 147 residues: uncharacterized protein (147 aa).

This is an uncharacterized protein from Mycoplasma genitalium (strain ATCC 33530 / DSM 19775 / NCTC 10195 / G37) (Mycoplasmoides genitalium).